Here is a 631-residue protein sequence, read N- to C-terminus: MPIHILPPQLANQIAAGEVVERPASVVKELVENSLDAGASRIQIDIENGGATLIRIRDNGLGIAKEDLSLALARHATSKISCLDDLEAILSLGFRGEALASISSVSRLTLTSRTAEQKEAWQVYAQGRDMETTIKPASHPVGTTVEVANLFFNTPARRKFLRTEKTEFAHIDEVVRRIALAKPQIAFTLTHNGKILRQYKSAVEIEQKLKRVSAICGEDFVQNALQIDWKHDNLHLSGWVAVPNFHRPQNDLSYSYVNGRMIRDKVINHAIRQAYGDYLTNEQYPAFVLYLDLDPNEVDVNVHPTKHEVRFHQARLIHDFICQGVGNALQSEQADFARYDTPASADEIQEPAANWHSSLIKPNRSAAGHNIFESASDKNISGANTYSHGSAKINRFSTKFAENIPHFSTKSVSKTEQKLYGNLLTTPAEAKKNTAINAESENSFEKNVSTPQQSTQLSGQFLHSLALVKNQALLLQQGQDFYLLPLAKLQKLKFELTLQQPDIAQQPLLIPILFRLNERQLAQWQKQKNFFLQSGFEFDENPAQHRITLNKVPSCLRQQNLQGCVIRLLEENHEKISDFLTALCNQLQLNEIHVLADALTLLTEVELLLKTQNKIQLAQLLISVDFTQYLQ.

This sequence belongs to the DNA mismatch repair MutL/HexB family.

This protein is involved in the repair of mismatches in DNA. It is required for dam-dependent methyl-directed DNA mismatch repair. May act as a 'molecular matchmaker', a protein that promotes the formation of a stable complex between two or more DNA-binding proteins in an ATP-dependent manner without itself being part of a final effector complex. This chain is DNA mismatch repair protein MutL, found in Mannheimia succiniciproducens (strain KCTC 0769BP / MBEL55E).